The primary structure comprises 565 residues: Sulfite reductase [NADPH] hemoprotein beta-component (565 aa).

Positions 429, 435, 474, and 478 each coordinate [4Fe-4S] cluster. Cys-478 contacts siroheme.

The protein belongs to the nitrite and sulfite reductase 4Fe-4S domain family. Alpha(8)-beta(8). The alpha component is a flavoprotein, the beta component is a hemoprotein. Siroheme serves as cofactor. Requires [4Fe-4S] cluster as cofactor.

The catalysed reaction is hydrogen sulfide + 3 NADP(+) + 3 H2O = sulfite + 3 NADPH + 4 H(+). The protein operates within sulfur metabolism; hydrogen sulfide biosynthesis; hydrogen sulfide from sulfite (NADPH route): step 1/1. In terms of biological role, component of the sulfite reductase complex that catalyzes the 6-electron reduction of sulfite to sulfide. This is one of several activities required for the biosynthesis of L-cysteine from sulfate. The protein is Sulfite reductase [NADPH] hemoprotein beta-component of Shewanella baltica (strain OS155 / ATCC BAA-1091).